We begin with the raw amino-acid sequence, 495 residues long: Trigger factor (495 aa).

Residues 169-254 (GDRVTIDYLG…VKEVAAPGEV (86 aa)) form the PPIase FKBP-type domain. A disordered region spans residues 439–495 (ALLADDESEDKPAAKKAAPKKKAAKAEATEAAAEGEEAAVPKKKAAPKKKAAEDSAE).

The protein belongs to the FKBP-type PPIase family. Tig subfamily.

It is found in the cytoplasm. The enzyme catalyses [protein]-peptidylproline (omega=180) = [protein]-peptidylproline (omega=0). Its function is as follows. Involved in protein export. Acts as a chaperone by maintaining the newly synthesized protein in an open conformation. Functions as a peptidyl-prolyl cis-trans isomerase. The protein is Trigger factor of Rhizobium rhizogenes (strain K84 / ATCC BAA-868) (Agrobacterium radiobacter).